A 363-amino-acid polypeptide reads, in one-letter code: Peptide chain release factor 1 (363 aa).

N5-methylglutamine is present on Q237.

This sequence belongs to the prokaryotic/mitochondrial release factor family. Methylated by PrmC. Methylation increases the termination efficiency of RF1.

The protein resides in the cytoplasm. In terms of biological role, peptide chain release factor 1 directs the termination of translation in response to the peptide chain termination codons UAG and UAA. The sequence is that of Peptide chain release factor 1 from Marinobacter nauticus (strain ATCC 700491 / DSM 11845 / VT8) (Marinobacter aquaeolei).